The primary structure comprises 470 residues: Sulfate adenylyltransferase subunit 1 (470 aa).

The region spanning 22–237 (KEVLRFITCG…LEEVPVKSEE (216 aa)) is the tr-type G domain. The tract at residues 31–38 (GSVDDGKS) is G1. 31–38 (GSVDDGKS) is a binding site for GTP. Positions 89–93 (GITID) are G2. The segment at 110-113 (DTPG) is G3. GTP-binding positions include 110–114 (DTPGH) and 165–168 (NKMD). Residues 165–168 (NKMD) are G4. Positions 202–204 (SAK) are G5.

The protein belongs to the TRAFAC class translation factor GTPase superfamily. Classic translation factor GTPase family. CysN/NodQ subfamily. In terms of assembly, heterodimer composed of CysD, the smaller subunit, and CysN.

The catalysed reaction is sulfate + ATP + H(+) = adenosine 5'-phosphosulfate + diphosphate. It functions in the pathway sulfur metabolism; hydrogen sulfide biosynthesis; sulfite from sulfate: step 1/3. In terms of biological role, with CysD forms the ATP sulfurylase (ATPS) that catalyzes the adenylation of sulfate producing adenosine 5'-phosphosulfate (APS) and diphosphate, the first enzymatic step in sulfur assimilation pathway. APS synthesis involves the formation of a high-energy phosphoric-sulfuric acid anhydride bond driven by GTP hydrolysis by CysN coupled to ATP hydrolysis by CysD. The sequence is that of Sulfate adenylyltransferase subunit 1 from Methylorubrum populi (strain ATCC BAA-705 / NCIMB 13946 / BJ001) (Methylobacterium populi).